The primary structure comprises 132 residues: Small ribosomal subunit protein eS24 (132 aa).

The tract at residues 91-132 (LATHGLYEKKKTSRKQRTERQNRMKKVRSIKKASVGAAGKKN) is disordered. The span at 96 to 112 (LYEKKKTSRKQRTERQN) shows a compositional bias: basic and acidic residues.

The protein belongs to the eukaryotic ribosomal protein eS24 family. In terms of assembly, component of the small ribosomal subunit.

It localises to the cytoplasm. In terms of biological role, component of the small ribosomal subunit. The ribosome is a large ribonucleoprotein complex responsible for the synthesis of proteins in the cell. Required for processing of pre-rRNA and maturation of 40S ribosomal subunits. This chain is Small ribosomal subunit protein eS24 (rps24), found in Oryzias latipes (Japanese rice fish).